A 216-amino-acid polypeptide reads, in one-letter code: Large ribosomal subunit protein uL1 (216 aa).

It belongs to the universal ribosomal protein uL1 family. Part of the 50S ribosomal subunit.

Binds directly to 23S rRNA. Probably involved in E site tRNA release. Its function is as follows. Protein L1 is also a translational repressor protein, it controls the translation of its operon by binding to its mRNA. The protein is Large ribosomal subunit protein uL1 of Thermococcus kodakarensis (strain ATCC BAA-918 / JCM 12380 / KOD1) (Pyrococcus kodakaraensis (strain KOD1)).